The primary structure comprises 133 residues: Large ribosomal subunit protein bL17 (133 aa).

The protein belongs to the bacterial ribosomal protein bL17 family. As to quaternary structure, part of the 50S ribosomal subunit. Contacts protein L32.

This chain is Large ribosomal subunit protein bL17, found in Nitratidesulfovibrio vulgaris (strain DSM 19637 / Miyazaki F) (Desulfovibrio vulgaris).